Here is a 326-residue protein sequence, read N- to C-terminus: UDP-3-O-acylglucosamine N-acyltransferase (326 aa).

Residue histidine 225 is the Proton acceptor of the active site.

It belongs to the transferase hexapeptide repeat family. LpxD subfamily. Homotrimer.

The enzyme catalyses a UDP-3-O-[(3R)-3-hydroxyacyl]-alpha-D-glucosamine + a (3R)-hydroxyacyl-[ACP] = a UDP-2-N,3-O-bis[(3R)-3-hydroxyacyl]-alpha-D-glucosamine + holo-[ACP] + H(+). Its pathway is bacterial outer membrane biogenesis; LPS lipid A biosynthesis. In terms of biological role, catalyzes the N-acylation of UDP-3-O-acylglucosamine using 3-hydroxyacyl-ACP as the acyl donor. Is involved in the biosynthesis of lipid A, a phosphorylated glycolipid that anchors the lipopolysaccharide to the outer membrane of the cell. This chain is UDP-3-O-acylglucosamine N-acyltransferase, found in Verminephrobacter eiseniae (strain EF01-2).